We begin with the raw amino-acid sequence, 258 residues long: Probable glycerol uptake facilitator protein (258 aa).

Transmembrane regions (helical) follow at residues 11–31 (WWFLAELIGTFILIIFGNGAV) and 50–70 (TVALTWGIGVLFGVLTANAIF). The NPA 1 motif lies at 77–79 (NPA). A run of 3 helical transmembrane segments spans residues 95-115 (ALIWPGFVIGILAQFLGAMIA), 152-172 (FLTEFIATLILIGGVVAASHF), and 180-200 (VPPGFMGLWLVAGIIIAFGGA). Positions 206–208 (NPA) match the NPA 2 motif. A helical membrane pass occupies residues 233 to 253 (WIPVIAPLSAGLVLSIIIGFS).

Belongs to the MIP/aquaporin (TC 1.A.8) family.

The protein resides in the cell membrane. It carries out the reaction glycerol(in) = glycerol(out). Its function is as follows. Mediates glycerol diffusion across the cytoplasmic membrane via a pore-type mechanism. This chain is Probable glycerol uptake facilitator protein (glpF), found in Mycoplasma genitalium (strain ATCC 33530 / DSM 19775 / NCTC 10195 / G37) (Mycoplasmoides genitalium).